Here is a 319-residue protein sequence, read N- to C-terminus: uncharacterized protein (319 aa).

The interval 281-319 (KVERKQRRRDDQNIMRSKLPQQRQNPFCSTERPKRARCD) is disordered. A compositionally biased stretch (polar residues) spans 299 to 308 (LPQQRQNPFC).

It is found in the cytoplasm. It localises to the nucleus. This is an uncharacterized protein from Saccharomyces cerevisiae (strain ATCC 204508 / S288c) (Baker's yeast).